The following is an 880-amino-acid chain: Alanine--tRNA ligase (880 aa).

Zn(2+) is bound by residues histidine 548, histidine 552, cysteine 651, and histidine 655.

It belongs to the class-II aminoacyl-tRNA synthetase family. Zn(2+) is required as a cofactor.

It localises to the cytoplasm. The catalysed reaction is tRNA(Ala) + L-alanine + ATP = L-alanyl-tRNA(Ala) + AMP + diphosphate. In terms of biological role, catalyzes the attachment of alanine to tRNA(Ala) in a two-step reaction: alanine is first activated by ATP to form Ala-AMP and then transferred to the acceptor end of tRNA(Ala). Also edits incorrectly charged Ser-tRNA(Ala) and Gly-tRNA(Ala) via its editing domain. The chain is Alanine--tRNA ligase from Tropheryma whipplei (strain TW08/27) (Whipple's bacillus).